A 268-amino-acid polypeptide reads, in one-letter code: Type-5 uracil-DNA glycosylase (268 aa).

The disordered stretch occupies residues 1–29 (MHPKTGRAFRSPVEPGSGWPGDPATPQTP). Residues Cys57, Cys60, Cys161, and Cys176 each contribute to the [4Fe-4S] cluster site.

It belongs to the uracil-DNA glycosylase (UDG) superfamily. Type 5 (UDGb) family.

In terms of biological role, DNA glycosylase with broad substrate specificity. This Mycobacterium bovis (strain ATCC BAA-935 / AF2122/97) protein is Type-5 uracil-DNA glycosylase.